Here is a 924-residue protein sequence, read N- to C-terminus: Exocyst complex component 2 (924 aa).

The IPT/TIG domain occupies 8 to 93 (PLVTGISPNE…GTSTVSFKLL (86 aa)). Residues 240-260 (QKLENVLNRASNTADTLFQEV) adopt a coiled-coil conformation. Serine 431, serine 432, and serine 435 each carry phosphoserine. Position 440 is a phosphothreonine (threonine 440). N6-acetyllysine is present on lysine 454.

This sequence belongs to the SEC5 family. As to quaternary structure, the exocyst complex is composed of EXOC1, EXOC2, EXOC3, EXOC4, EXOC5, EXOC6, EXOC7 and EXOC8. Interacts with EXOC3L1. Interacts with GNEFR/DELGEF; this interaction occurs only in the presence of magnesium or manganese and is stimulated by dCTP or GTP. Interacts with RALA and RALB. Interacts with ARL13B; regulates ARL13B localization to the cilium membrane.

It is found in the midbody. Its subcellular location is the midbody ring. Functionally, component of the exocyst complex involved in the docking of exocytic vesicles with fusion sites on the plasma membrane. The polypeptide is Exocyst complex component 2 (Exoc2) (Mus musculus (Mouse)).